The sequence spans 443 residues: EGF-containing fibulin-like extracellular matrix protein 2 (443 aa).

The signal sequence occupies residues 1-25; that stretch reads MLPFASCLPGSLLLWALLLLLLGAA. Positions 36 to 81 constitute an EGF-like 1; atypical domain; the sequence is YTECTDGYEWDADSQHCRDVNECLTIPEACKGEMKCINHYGGYLCL. 18 disulfide bridges follow: Cys58–Cys121, Cys65–Cys80, Cys71–Cys109, Cys127–Cys140, Cys134–Cys149, Cys151–Cys162, Cys168–Cys177, Cys173–Cys186, Cys188–Cys201, Cys207–Cys217, Cys213–Cys226, Cys228–Cys241, Cys247–Cys258, Cys254–Cys267, Cys269–Cys281, Cys287–Cys300, Cys294–Cys309, and Cys315–Cys327. Residues 123–163 enclose the EGF-like 2; calcium-binding domain; sequence DVDECAQALHDCRPSQDCHNLPGSYQCTCPDGYRKVGPECV. Residues 164–202 form the EGF-like 3; calcium-binding domain; that stretch reads DIDECRYRYCQHRCVNLPGSFRCQCEPGFQLGPNNRSCV. The N-linked (GlcNAc...) asparagine glycan is linked to Asn198. In terms of domain architecture, EGF-like 4; calcium-binding spans 203–242; the sequence is DVNECDMGAPCEQRCFNSYGTFLCRCNQGYELHRDGFSCS. An EGF-like 5; calcium-binding domain is found at 243 to 282; the sequence is DIDECSYSSYLCQYRCVNEPGRFSCHCPQGYQLLATRLCQ. The 46-residue stretch at 283-328 folds into the EGF-like 6; calcium-binding domain; that stretch reads DIDECETGAHQCSEAQTCVNFHGGYRCVDTNRCVEPYVQVSDNRCF. An N-linked (GlcNAc...) asparagine glycan is attached at Asn394.

The protein belongs to the fibulin family. As to quaternary structure, homodimer; disulfide-linked. Multimer; allows heparin binding. Monomer. Interacts with FBN1 (via N-terminal domain); this interaction inhibits EFEMP2 binding to LOX and ELN. Interacts with LOX (via propeptide); this interaction is strong and facilitates formation of ternary complexes with ELN during elastic fiber assembly; this interaction limits interaction of EFEMP2 with FBLN5. Interacts with PITX2. Interacts with ELN with moderate affinity; this interaction regulates ELN self-assembly maturation stage. Interacts with FBLN5 with moderate affinity. Interacts with LOXL1 (via propeptide), LTBP1 and TGFB1 stronger than with LOXL2 and LTBP3. Interacts with PCOLCE. Interacts with collagen type IV trimer (COL4A1-COL4A1-COL4A2), NID2 and moderately with COL15A1-derived endostatin. Interacts with EMILIN1; this interaction promotes the incorporation of EFEMP2 into the extracellular matrix. Interacts with LTBP4; the LTBP4 long form (LTBP4L) has a stronger binding affinity than the LTBP4 short form and the LTBP4 long form promotes fibrillar deposition of EFEMP2. In terms of processing, N-glycosylated; contains mostly complex-type glycans. Not O-glycosylated. Cleaved by ELANE; produces a 50-55 kDa fragment. Cleaved by MMP2 and MMP9; produces several fragments.

The protein localises to the secreted. It is found in the extracellular space. Its subcellular location is the extracellular matrix. The protein resides in the basement membrane. Its function is as follows. Plays a crucial role in elastic fiber formation in tissue, and in the formation of ultrastructural connections between elastic laminae and smooth muscle cells in the aorta, therefore participates in terminal differentiation and maturation of smooth muscle cell (SMC) and in the mechanical properties and wall integrity maintenance of the aorta. In addition, is involved in the control of collagen fibril assembly in tissue throught proteolytic activation of LOX leading to cross- linking of collagen and elastin. Also promotes ELN coacervation and participates in the deposition of ELN coacervates on to microfibrils but also regulates ELN cross- linking through LOX interaction. Moreover adheres to the cells through heparin binding in a calcium-dependent manner and regulates vascularlar smooth muscle cells proliferation through angiotensin signaling. In Cricetulus griseus (Chinese hamster), this protein is EGF-containing fibulin-like extracellular matrix protein 2.